The primary structure comprises 416 residues: MLEQMGIAAKAASYKLALLSSREKNRVLEKIADELESQTETILSANAQDVAQARENGLSDAMLDRLALTPARLKSIADDVRQVCHLTDPVGQVIDGGLLDSGLRLERRRVPLGVIGVIYEARPNVTVDVASLCLKTGNAVILRGGKETHRTNAATVRVIQKALKACGLPEAAVQAIDNPDRSLVNEMLRMDKYIDMLIPRGGAGLHKLCREQSTIPVITGGIGVCHIFVDSSAEIAPALEIIVNAKTQRPSTCNTVETLLVHQDIAERFLPVLSQQMAESDVTLHGDERVMQIMKGPAKRIPLKPEELDNEFLSLDLNVVMVMNIDHAINHIREHGTQHSDAILTCDMHNAARFVNEVDSAAVYVNASTRFTDGGQFGLGAEVAVSTQKLHARGPMGLEALTTYKWIGFGDGTIRA.

Belongs to the gamma-glutamyl phosphate reductase family.

The protein localises to the cytoplasm. It catalyses the reaction L-glutamate 5-semialdehyde + phosphate + NADP(+) = L-glutamyl 5-phosphate + NADPH + H(+). It participates in amino-acid biosynthesis; L-proline biosynthesis; L-glutamate 5-semialdehyde from L-glutamate: step 2/2. Catalyzes the NADPH-dependent reduction of L-glutamate 5-phosphate into L-glutamate 5-semialdehyde and phosphate. The product spontaneously undergoes cyclization to form 1-pyrroline-5-carboxylate. The protein is Gamma-glutamyl phosphate reductase of Salmonella arizonae (strain ATCC BAA-731 / CDC346-86 / RSK2980).